The sequence spans 103 residues: Large ribosomal subunit protein bL21 (103 aa).

The protein belongs to the bacterial ribosomal protein bL21 family. As to quaternary structure, part of the 50S ribosomal subunit. Contacts protein L20.

In terms of biological role, this protein binds to 23S rRNA in the presence of protein L20. The polypeptide is Large ribosomal subunit protein bL21 (Variovorax paradoxus (strain S110)).